The sequence spans 1419 residues: Formin-1 (1419 aa).

The segment at 1 to 622 (MEGTHCTLQL…TAEPQHQSPP (622 aa)) is microtubule-binding. Disordered stretches follow at residues 138–194 (DWQG…MGKD), 262–331 (LGRE…KVVA), 343–641 (VVKT…TPKD), and 685–711 (SLTE…DTEE). A compositionally biased stretch (basic residues) spans 151–163 (RSTHGNKKPRRSS). The span at 298–317 (SHQDPEKHPEAEKDEMEKPA) shows a compositional bias: basic and acidic residues. Over residues 394–411 (RSSQSPAGETASISSVSA) the composition is skewed to polar residues. The span at 425 to 438 (IESEKLDEAPEGKR) shows a compositional bias: basic and acidic residues. Residues 456–842 (NKRRAGLPLG…LNISSLSQLS (387 aa)) are mediates interaction with alpha-catenin. The span at 504–517 (FNNSASQSSTHKQT) shows a compositional bias: polar residues. Over residues 520–529 (VPSPLSPRLP) the composition is skewed to pro residues. Positions 614 to 623 (AEPQHQSPPG) are enriched in polar residues. The span at 685–694 (SLTEQDDRTP) shows a compositional bias: basic and acidic residues. Positions 720–774 (AEYQAAILHLKREHKEEIENLQAQFELRAFHIRGEHAMITARLEETIENLKHELE) form a coiled coil. Disordered stretches follow at residues 859–978 (GMAS…AIEP) and 1390–1419 (SEKK…VTTN). Composition is skewed to pro residues over residues 868-882 (LPPP…PPLP) and 890-958 (PAPP…PPPG). The region spanning 870-957 (PPPASIPPPP…PPGLAPPPPP (88 aa)) is the FH1 domain. An FH2 domain is found at 972-1388 (RKPAIEPSCP…KMAQESVSKL (417 aa)).

Belongs to the formin homology family. Cappuccino subfamily. As to quaternary structure, interacts with alpha-catenin and may interact with tubulin. In terms of processing, phosphorylated on serine and possibly threonine residues.

The protein localises to the nucleus. The protein resides in the cytoplasm. It localises to the cell junction. Its subcellular location is the adherens junction. It is found in the cell membrane. Its function is as follows. Plays a role in the formation of adherens junction and the polymerization of linear actin cables. This chain is Formin-1 (FMN1), found in Homo sapiens (Human).